Here is a 305-residue protein sequence, read N- to C-terminus: Methionyl-tRNA formyltransferase (305 aa).

110–113 is a (6S)-5,6,7,8-tetrahydrofolate binding site; sequence SLLP.

Belongs to the Fmt family.

It catalyses the reaction L-methionyl-tRNA(fMet) + (6R)-10-formyltetrahydrofolate = N-formyl-L-methionyl-tRNA(fMet) + (6S)-5,6,7,8-tetrahydrofolate + H(+). Attaches a formyl group to the free amino group of methionyl-tRNA(fMet). The formyl group appears to play a dual role in the initiator identity of N-formylmethionyl-tRNA by promoting its recognition by IF2 and preventing the misappropriation of this tRNA by the elongation apparatus. The sequence is that of Methionyl-tRNA formyltransferase from Ureaplasma parvum serovar 3 (strain ATCC 700970).